A 362-amino-acid chain; its full sequence is Ferredoxin--NADP reductase, leaf isozyme 1, chloroplastic (362 aa).

The transit peptide at 1 to 62 (MAAVTAAAVS…DAAAVAAAPA (62 aa)) directs the protein to the chloroplast. Residues 83–205 (KEPYVGKCLL…TGPVGKEMLM (123 aa)) form the FAD-binding FR-type domain. Residues 141–144 (RLYS), 162–164 (CVK), tyrosine 168, 179–181 (VCS), and threonine 220 contribute to the FAD site. NADP(+) is bound by residues serine 144 and lysine 164. A disulfide bond links cysteine 180 and cysteine 185. Serine 181 bears the Phosphoserine mark. Residues threonine 220, 252–253 (VP), 282–283 (SR), lysine 292, 321–322 (GL), and glutamate 360 each bind NADP(+).

The protein belongs to the ferredoxin--NADP reductase type 1 family. As to quaternary structure, component of high molecular weight thylakoid LFNRs-containing protein complexes containing LIR1, LFNR1, LFNR2, TIC62 and TROL proteins. Interacts directly with LIR1 and TIC62; LIR1 increases the affinity of LFNR1 and LFNR2 for TIC62. It depends on FAD as a cofactor. In terms of processing, may form interchain disulfide bonds with LIR1.

It is found in the plastid. The protein resides in the chloroplast stroma. The protein localises to the chloroplast thylakoid membrane. It catalyses the reaction 2 reduced [2Fe-2S]-[ferredoxin] + NADP(+) + H(+) = 2 oxidized [2Fe-2S]-[ferredoxin] + NADPH. It functions in the pathway energy metabolism; photosynthesis. In terms of biological role, may play a key role in regulating the relative amounts of cyclic and non-cyclic electron flow to meet the demands of the plant for ATP and reducing power. The protein is Ferredoxin--NADP reductase, leaf isozyme 1, chloroplastic of Oryza sativa subsp. japonica (Rice).